Consider the following 63-residue polypeptide: Light-harvesting protein B-800/850 alpha chain (63 aa).

Residues 1 to 14 (MNNAKMWLVVKPTV) lie on the Cytoplasmic side of the membrane. The chain crosses the membrane as a helical span at residues 15–35 (GIPLFLVACAIASFLVHLMLV). An a bacteriochlorophyll-binding site is contributed by H31. Residues 36-63 (LTTGWMGDYYSGSFEAASLVSNATTLLS) are Periplasmic-facing.

The protein belongs to the antenna complex alpha subunit family. The core complex is formed by different alpha and beta chains, binding bacteriochlorophyll molecules, and arranged most probably in tetrameric structures disposed around the reaction center. The non-pigmented gamma chains may constitute additional components.

It localises to the cell inner membrane. Antenna complexes are light-harvesting systems, which transfer the excitation energy to the reaction centers. The polypeptide is Light-harvesting protein B-800/850 alpha chain (pucA) (Rhodovulum sulfidophilum (Rhodobacter sulfidophilus)).